Here is a 311-residue protein sequence, read N- to C-terminus: MAEMDLVAELPRPAGAARWAEVMARFAARLGEQGRRVVLITSGGTKVPLEARAVRFLDNFSSGRRGAASAEVFLAAGYGVLFLYRARSAFPYAHRFPPQAWLSALRPSGPAQSGKLSLEAEENALPGFAAALQSYQEAAAAGTFLAVEFTTLADYLHLLQAAALALSPLGSSAMFYLAAAVSDFYIPVSEMPEHKIHSSGGPLQITMKMVPKMLSPLVKDWAPKAFVVSFKLETDPDIIISRARNALEVYQHQVVVANILESIKSFVIIVTKDSETELLLSEEEVAKGLVIEEKIVDDLRSRHTAFICDKN.

Position 2 is an N-acetylalanine (alanine 2).

Belongs to the PPC synthetase family. Homodimer.

The catalysed reaction is (R)-4'-phosphopantothenate + L-cysteine + ATP = N-[(R)-4-phosphopantothenoyl]-L-cysteine + AMP + diphosphate + H(+). The enzyme catalyses (R)-4'-phosphopantothenate + L-cysteine + CTP = N-[(R)-4-phosphopantothenoyl]-L-cysteine + CMP + diphosphate + H(+). Its pathway is cofactor biosynthesis; coenzyme A biosynthesis; CoA from (R)-pantothenate: step 2/5. Its function is as follows. Catalyzes the second step in the biosynthesis of coenzyme A from vitamin B5, where cysteine is conjugated to 4'-phosphopantothenate to form 4-phosphopantothenoylcysteine. Has a preference for ATP over CTP as a cosubstrate. The sequence is that of Phosphopantothenate--cysteine ligase (Ppcs) from Mus musculus (Mouse).